A 256-amino-acid polypeptide reads, in one-letter code: uncharacterized protein (256 aa).

An HTH cro/C1-type domain is found at 10–64; the sequence is IRALRESRDWSLADLAAATGVSTMGLSYLERGARKPHKSTVQKVENGLGLPPGTY. The H-T-H motif DNA-binding region spans 21 to 40; it reads LADLAAATGVSTMGLSYLER.

This is an uncharacterized protein from Mycobacterium bovis (strain ATCC BAA-935 / AF2122/97).